The sequence spans 595 residues: Methionine--tRNA ligase (595 aa).

Positions 11–21 (PYANGPRHIGH) match the 'HIGH' region motif. Zn(2+)-binding residues include Cys143, Cys146, Cys156, and Cys159. The 'KMSKS' region signature appears at 350–354 (KFSSS). Ser353 is a binding site for ATP.

This sequence belongs to the class-I aminoacyl-tRNA synthetase family. MetG type 1 subfamily. Monomer. The cofactor is Zn(2+).

The protein resides in the cytoplasm. The enzyme catalyses tRNA(Met) + L-methionine + ATP = L-methionyl-tRNA(Met) + AMP + diphosphate. Its function is as follows. Is required not only for elongation of protein synthesis but also for the initiation of all mRNA translation through initiator tRNA(fMet) aminoacylation. The polypeptide is Methionine--tRNA ligase (Nocardioides sp. (strain ATCC BAA-499 / JS614)).